A 257-amino-acid polypeptide reads, in one-letter code: Zinc transporter ZupT (257 aa).

The next 3 helical transmembrane spans lie at 5 to 25 (LILTILAGAATFIGAFLGVLG), 32 to 52 (LLAFSLGFAAGIMLLISLMEM), and 61 to 81 (GMSPVLGYGMFIFGLLGYFGL). Residues asparagine 120 and glutamate 123 each contribute to the Fe(2+) site. 2 residues coordinate Zn(2+): glutamate 123 and histidine 148. 4 consecutive transmembrane segments (helical) span residues 137–157 (LGFGIALAVALHNIPEGLAVA), 171–191 (ILWAGISGLAEILGGVLAWLI), 195–215 (MISPVVMAAIMAVVAGIMVAL), and 236–256 (GVLCGMSVMGFSLVLLQTAGI). Fe(2+) is bound by residues asparagine 149, glutamate 152, and glutamate 181. Glutamate 152 is a Zn(2+) binding site.

This sequence belongs to the ZIP transporter (TC 2.A.5) family. ZupT subfamily.

The protein resides in the cell inner membrane. It carries out the reaction Zn(2+)(in) = Zn(2+)(out). Mediates zinc uptake. May also transport other divalent cations. The sequence is that of Zinc transporter ZupT from Escherichia coli O7:K1 (strain IAI39 / ExPEC).